A 106-amino-acid polypeptide reads, in one-letter code: ATP synthase-coupling factor 6, mitochondrial (106 aa).

It belongs to the eukaryotic ATPase subunit F6 family. As to quaternary structure, F-type ATPases have 2 components, CF(1) - the catalytic core - and CF(0) - the membrane proton channel. CF(0) seems to have nine subunits: a, b, c, d, e, f, g, F6 and 8 (or A6L).

The protein localises to the mitochondrion. Its subcellular location is the mitochondrion inner membrane. Functionally, mitochondrial membrane ATP synthase (F(1)F(0) ATP synthase or Complex V) produces ATP from ADP in the presence of a proton gradient across the membrane which is generated by electron transport complexes of the respiratory chain. F-type ATPases consist of two structural domains, F(1) - containing the extramembraneous catalytic core and F(0) - containing the membrane proton channel, linked together by a central stalk and a peripheral stalk. During catalysis, ATP synthesis in the catalytic domain of F(1) is coupled via a rotary mechanism of the central stalk subunits to proton translocation. Part of the complex F(0) domain and the peripheric stalk, which acts as a stator to hold the catalytic alpha(3)beta(3) subcomplex and subunit a/ATP6 static relative to the rotary elements. The protein is ATP synthase-coupling factor 6, mitochondrial of Drosophila melanogaster (Fruit fly).